The sequence spans 308 residues: uncharacterized protein (308 aa).

This is an uncharacterized protein from Methanocaldococcus jannaschii (strain ATCC 43067 / DSM 2661 / JAL-1 / JCM 10045 / NBRC 100440) (Methanococcus jannaschii).